The following is a 346-amino-acid chain: Putative alpha/beta hydrolase R526 (346 aa).

This sequence belongs to the AB hydrolase 3 family.

It is found in the virion. The protein is Putative alpha/beta hydrolase R526 of Acanthamoeba polyphaga mimivirus (APMV).